The primary structure comprises 218 residues: Adenylate kinase (218 aa).

Residue 11–16 (GAGKGT) participates in ATP binding. Residues 31–60 (STGDMFREAMANKTKVGLEAKSYIDKGNLV) form an NMP region. AMP-binding positions include Thr32, Arg37, 58 to 60 (NLV), 86 to 89 (GFPR), and Gln93. An LID region spans residues 127–165 (ARYMCKNCGATYNKISKQPKVEGTCDRCGSHEFYQREDD). Arg128 provides a ligand contact to ATP. Residues Cys131 and Cys134 each coordinate Zn(2+). 137 to 138 (TY) contacts ATP. Residues Cys151 and Cys154 each contribute to the Zn(2+) site. AMP-binding residues include Arg162 and Arg173. Gln201 is an ATP binding site.

This sequence belongs to the adenylate kinase family. In terms of assembly, monomer.

It is found in the cytoplasm. It carries out the reaction AMP + ATP = 2 ADP. It functions in the pathway purine metabolism; AMP biosynthesis via salvage pathway; AMP from ADP: step 1/1. Functionally, catalyzes the reversible transfer of the terminal phosphate group between ATP and AMP. Plays an important role in cellular energy homeostasis and in adenine nucleotide metabolism. In Lactobacillus acidophilus (strain ATCC 700396 / NCK56 / N2 / NCFM), this protein is Adenylate kinase.